A 3567-amino-acid polypeptide reads, in one-letter code: MTDSEKVAEYLRRATLDLRAARQRIRELESDPIAIVSMACRLPGGVNTPQRLWELLREGGETLSGFPTDRGWDLARLHHPDPDNPGTSYVDKGGFLDDAAGFDAEFFGVSPREAAAMDPQQRLLLETSWELVENAGIDPHSLRGTATGVFLGVAKFGYGEDTAAAEDVEGYSVTGVAPAVASGRISYTMGLEGPSISVDTACSSSLVALHLAVESLRKGESSMAVVGGAAVMATPGVFVDFSRQRALAADGRSKAFGAGADGFGFSEGVTLVLLERLSEARRNGHEVLAVVRGSALNQDGASNGLSAPSGPAQRRVIRQALESCGLEPGDVDAVEAHGTGTALGDPIEANALLDTYGRDRDADRPLWLGSVKSNIGHTQAAAGVTGLLKVVLALRNGELPATLHVEEPTPHVDWSSGGVALLAGNQPWRRGERTRRARVSAFGISGTNAHVIVEEAPEREHRETTAHDGRPVPLVVSARTTAALRAQAAQIAELLERPDADLAGVGLGLATTRARHEHRAAVVASTREEAVRGLREIAAGAATADAVVEGVTEVDGRNVVFLFPGQGSQWAGMGAELLSSSPVFAGKIRACDESMAPMQDWKVSDVLRQAPGAPGLDRVDVVQPVLFAVMVSLAELWRSYGVEPAAVVGHSQGEIAAAHVAGALTLEDAAKLVVGRSRLMRSLSGEGGMAAVALGEAAVRERLRPWQDRLSVAAVNGPRSVVVSGEPGALRAFSEDCAAEGIRVRDIDVDYASHSPQIERVREELLETTGDIAPRPARVTFHSTVESRSMDGTELDARYWYRNLRETVRFADAVTRLAESGYDAFIEVSPHPVVVQAVEEAVEEADGAEDAVVVGSLHRDGGDLSAFLRSMATAHVSGVDIRWDVALPGAAPFALPTYPFQRKRYWLQPAAPAAASDELAYRVSWTPIEKPESGNLDGDWLVVTPLISPEWTEMLCEAINANGGRALRCEVDTSASRTEMAQAVAQAGTGFRGVLSLLSSDESACRPGVPAGAVGLLTLVQALGDAGVDAPVWCLTQGAVRTPADDDLARPAQTTAHGFAQVAGLELPGRWGGVVDLPESVDDAALRLLVAVLRGGGRAEDHLAVRDGRLHGRRVVRASLPQSGSRSWTPHGTVLVTGAASPVGDQLVRWLADRGAERLVLAGACPGDDLLAAVEEAGASAVVCAQDAAALREALGDEPVTALVHAGTLTNFGSISEVAPEEFAETIAAKTALLAVLDEVLGDRAVEREVYCSSVAGIWGGAGMAAYAAGSAYLDALAEHHRARGRSCTSVAWTPWALPGGAVDDGYLRERGLRSLSADRAMRTWERVLAAGPVSVAVADVDWPVLSEGFAATRPTALFAELAGRGGQAEAEPDSGPTGEPAQRLAGLSPDEQQENLLELVANAVAEVLGHESAAEINVRRAFSELGLDSLNAMALRKRLSASTGLRLPASLVFDHPTVTALAQHLRARLVGDADQAAVRVVGAADESEPIAIVGIGCRFPGGIGSPEQLWRVLAEGANLTTGFPADRGWDIGRLYHPDPDNPGTSYVDKGGFLTDAADFDPGFFGITPREALAMDPQQRLMLETAWEAVERAGIDPDALRGTDTGVFVGMNGQSYMQLLAGEAERVDGYQGLGNSASVLSGRIAYTFGWEGPALTVDTACSSSLVGIHLAMQALRRGECSLALAGGVTVMSDPYTFVDFSTQRGLASDGRCKAFSARADGFALSEGVAALVLEPLSRARANGHQVLAVLRGSAVNQDGASNGLAAPNGPSQERVIRQALAASGVPAADVDVVEAHGTGTELGDPIEAGALIATYGQDRDRPLRLGSVKTNIGHTQAAAGAAGVIKVVLAMRHGMLPRSLHADELSPHIDWESGAVEVLREEVPWPAGERPRRAGVSSFGVSGTNAHVIVEEAPAEQEAARTERGPLPFVLSGRSEAVVAAQARALAEHLRDTPELGLTDAAWTLATGRARFDVRAAVLGDDRAGVCAELDALAEGRPSADAVAPVTSAPRKPVLVFPGQGAQWVGMARDLLESSEVFAESMSRCAEALSPHTDWKLLDVVRGDGGPDPHERVDVLQPVLFSIMVSLAELWRAHGVTPAAVVGHSQGEIAAAHVAGALSLEAAAKVVALRSQVLRELDDQGGMVSVGASRDELETVLARWDGRVAVAAVNGPGTSVVAGPTAELDEFFAEAEAREMKPRRIAVRYASHSPEVARIEDRLAAELGTITAVRGSVPLHSTVTGEVIDTSAMDASYWYRNLRRPVLFEQAVRGLVEQGFDTFVEVSPHPVLLMAVEETAEHAGAEVTCVPTLRREQSGPHEFLRNLLRAHVHGVGADLRPAVAGGRPAELPTYPFEHQRFWPRPHRPADVSALGVRGAEHPLLLAAVDVPGHGGAVFTGRLSTDEQPWLAEHVVGGRTLVPGSVLVDLALAAGEDVGLPVLEELVLQRPLVLAGAGALLRMSVGAPDESGRRTIDVHAAEDVADLADAQWSQHATGTLAQGVAAGPRDTEQWPPEDAVRIPLDDHYDGLAEQGYEYGPSFQALRAAWRKDDSVYAEVSIAADEEGYAFHPVLLDAVAQTLSLGALGEPGGGKLPFAWNTVTLHASGATSVRVVATPAGADAMALRVTDPAGHLVATVDSLVVRSTGEKWEQPEPRGGEGELHALDWGRLAEPGSTGRVVAADASDLDAVLRSGEPEPDAVLVRYEPEGDDPRAAARHGVLWAAALVRRWLEQEELPGATLVIATSGAVTVSDDDSVPEPGAAAMWGVIRCAQAESPDRFVLLDTDAEPGMLPAVPDNPQLALRGDDVFVPRLSPLAPSALTLPAGTQRLVPGDGAIDSVAFEPAPDVEQPLRAGEVRVDVRATGVNFRDVLLALGMYPQKADMGTEAAGVVTAVGPDVDAFAPGDRVLGLFQGAFAPIAVTDHRLLARVPDGWSDADAAAVPIAYTTAHYALHDLAGLRAGQSVLIHAAAGGVGMAAVALARRAGAEVLATAGPAKHGTLRALGLDDEHIASSRETGFARKFRERTGGRGVDVVLNSLTGELLDESADLLAEDGVFVEMGKTDLRDAGDFRGRYAPFDLGEAGDDRLGEILREVVGLLGAGELDRLPVSAWELGSAPAALQHMSRGRHVGKLVLTQPAPVDPDGTVLITGGTGTLGRLLARHLVTEHGVRHLLLVSRRGADAPGSDELRAEIEDLGASAEIAACDTADRDALSALLDGLPRPLTGVVHAAGVLADGLVTSIDEPAVEQVLRAKVDAAWNLHELTANTGLSFFVLFSSAASVLAGPGQGVYAAANESLNALAALRRTRGLPAKALGWGLWAQASEMTSGLGDRIARTGVAALPTERALALFDSALRRGGEVVFPLSINRSALRRAEFVPEVLRGMVRAKLRAAGQAEAAGPNVVDRLAGRSESDQVAGLAELVRSHAAAVSGYGSADQLPERKAFKDLGFDSLAAVELRNRLGTATGVRLPSTLVFDHPTPLAVAEHLRDRLFAASPAVDIGDRLDELEKALEALSAEDGHDDVGQRLESLLRRWNSRRADAPSTSAISEDASDDELFSMLDQRFGGGEDL.

The region spanning 30–455 (SDPIAIVSMA…GTNAHVIVEE (426 aa)) is the Ketosynthase family 3 (KS3) 1 domain. 2 module regions span residues 33–1467 (IAIV…QHLR) and 1491–3485 (IAIV…EHLR). The Acyl-thioester intermediate; for beta-ketoacyl synthase 1 activity role is filled by Cys202. Residues His337 and His377 each act as for beta-ketoacyl synthase 1 activity in the active site. The interval 560 to 880 (VFLFPGQGSQ…MATAHVSGVD (321 aa)) is acyltransferase 1. Ser651 acts as the Acyl-ester intermediate; for acyltransferase 1 activity in catalysis. The C2-type beta-ketoacyl reductase 1 stretch occupies residues 1132–1297 (GTVLVTGAAS…CTSVAWTPWA (166 aa)). Tyr1267 functions as the For C2-type beta-ketoacyl reductase 1 and probable racemase activity in the catalytic mechanism. Residues 1364–1385 (GRGGQAEAEPDSGPTGEPAQRL) are disordered. In terms of domain architecture, Carrier 1 spans 1395 to 1470 (ENLLELVANA…ALAQHLRARL (76 aa)). An O-(pantetheine 4'-phosphoryl)serine modification is found at Ser1430. Positions 1488–1912 (SEPIAIVGIG…GTNAHVIVEE (425 aa)) constitute a Ketosynthase family 3 (KS3) 2 domain. The active-site Acyl-thioester intermediate; for beta-ketoacyl synthase 2 activity is the Cys1661. Residues His1796 and His1834 each act as for beta-ketoacyl synthase 2 activity in the active site. The acyltransferase 2 stretch occupies residues 2015–2331 (LVFPGQGAQW…NLLRAHVHGV (317 aa)). Catalysis depends on Ser2105, which acts as the Acyl-ester intermediate; for acyltransferase 2 activity. The N-terminal hotdog fold stretch occupies residues 2377-2502 (HPLLLAAVDV…GTLAQGVAAG (126 aa)). Residues 2377 to 2645 (HPLLLAAVDV…SLVVRSTGEK (269 aa)) form a dehydratase region. Residues 2377–2648 (HPLLLAAVDV…VRSTGEKWEQ (272 aa)) form the PKS/mFAS DH domain. The active-site Proton acceptor; for dehydratase activity is the His2409. The interval 2514-2648 (AVRIPLDDHY…VRSTGEKWEQ (135 aa)) is C-terminal hotdog fold. Residue Asp2571 is the Proton donor; for dehydratase activity of the active site. The segment at 2831–3131 (GAIDSVAFEP…RGRHVGKLVL (301 aa)) is enoyl reductase. Residue Tyr2874 is the For enoyl reductase activity of the active site. NADP(+) contacts are provided by residues 2964 to 2973 (HAAAGGVGMA), 3149 to 3152 (TGTL), 3173 to 3176 (SRRG), 3202 to 3203 (DT), Lys3250, and 3272 to 3273 (FS). A beta-ketoacyl reductase 2 region spans residues 3141-3317 (GTVLITGGTG…AKALGWGLWA (177 aa)). Tyr3287 functions as the For beta-ketoacyl reductase 2 activity in the catalytic mechanism. Positions 3413-3488 (AGLAELVRSH…AVAEHLRDRL (76 aa)) constitute a Carrier 2 domain. Ser3448 carries the post-translational modification O-(pantetheine 4'-phosphoryl)serine.

As to quaternary structure, homodimer. Erythronolide synthase is composed of EryAI, EryAII and EryAIII multimodular (2 modules) polypeptides each coding for a functional synthase subunit which participates in 2 of the six FAS-like elongation steps required for formation of the polyketide. Module 1, 2, 3, 4, 5, and 6 participating in biosynthesis steps 1, 2, 3, 4, 5, and 6, respectively. It depends on pantetheine 4'-phosphate as a cofactor.

It carries out the reaction 6 (S)-methylmalonyl-CoA + propanoyl-CoA + 6 NADPH + 12 H(+) = 6-deoxyerythronolide B + 6 CO2 + 6 NADP(+) + 7 CoA + H2O. Its pathway is antibiotic biosynthesis; erythromycin biosynthesis. Involved in the biosynthesis of antibiotic erythromycin via the biosynthesis of its aglycone precursor, 6-deoxyerythronolide B (6-dEB). The sequence is that of Erythronolide synthase EryA2 from Saccharopolyspora erythraea (Streptomyces erythraeus).